Reading from the N-terminus, the 437-residue chain is Sperm-associated antigen 4 protein (437 aa).

Positions 1–12 (MRRSSRPGSASS) are enriched in low complexity. A disordered region spans residues 1–88 (MRRSSRPGSA…KPAPRSHNWQ (88 aa)). 2 stretches are compositionally biased toward polar residues: residues 19-31 (NFFS…SITS) and 72-88 (WAGS…HNWQ). Helical transmembrane passes span 135–155 (FLSL…DVLV) and 166–186 (FLFT…LGLL). Residues 197–244 (KEMLTLSEYHERVRSQGQQLQQLQAELDKLHKEVSTVRAANSERVAKL) adopt a coiled-coil conformation. The region spanning 265–425 (GASIDLQKTS…YRVRAHGVRT (161 aa)) is the SUN domain.

In terms of assembly, homodimer. Interacts with ODF1. May associate with microtubules. Interacts with SUN3 and SYNE1; suggesting the formation of a spermatogenesis-specific LINC complex; a SUN domain-based heterotrimer with SUN3 may associate with SYNE1. Interacts with SEPT12 and LMNB1; during spermatogenesis. As to expression, predominantly epressed in testis. Expressed in ejaculated spermatozoa (at protein level).

The protein localises to the membrane. The protein resides in the cytoplasm. Its subcellular location is the cytoskeleton. It is found in the flagellum axoneme. It localises to the nucleus envelope. The protein localises to the nucleus inner membrane. Involved in spermatogenesis. Required for sperm head formation but not required to establish and maintain general polarity of the sperm head. Required for anchoring and organization of the manchette. Required for targeting of SUN3 and probably SYNE1 through a probable SUN1:SYNE3 LINC complex to the nuclear envelope and involved in accurate posterior sperm head localization of the complex. May anchor SUN3 the nuclear envelope. Involved in maintenance of the nuclear envelope integrity. May assist the organization and assembly of outer dense fibers (ODFs), a specific structure of the sperm tail. This Homo sapiens (Human) protein is Sperm-associated antigen 4 protein (SPAG4).